Reading from the N-terminus, the 434-residue chain is Alpha-enolase (434 aa).

S40 is a binding site for Mg(2+). H158 and E167 together coordinate substrate. E210 (proton donor) is an active-site residue. Mg(2+)-binding residues include D245, E293, and D318. The substrate site is built by E293 and D318. K343 functions as the Proton acceptor in the catalytic mechanism. Substrate-binding positions include 370 to 373 (SHRS) and K394.

This sequence belongs to the enolase family. In terms of assembly, homodimer. Mg(2+) is required as a cofactor.

The protein resides in the cytoplasm. It catalyses the reaction (2R)-2-phosphoglycerate = phosphoenolpyruvate + H2O. It participates in carbohydrate degradation; glycolysis; pyruvate from D-glyceraldehyde 3-phosphate: step 4/5. This is Alpha-enolase from Sceloporus undulatus (Eastern fence lizard).